Reading from the N-terminus, the 207-residue chain is Probable RNA 2'-phosphotransferase (207 aa).

This sequence belongs to the KptA/TPT1 family.

Functionally, removes the 2'-phosphate from RNA via an intermediate in which the phosphate is ADP-ribosylated by NAD followed by a presumed transesterification to release the RNA and generate ADP-ribose 1''-2''-cyclic phosphate (APPR&gt;P). May function as an ADP-ribosylase. This Methanosarcina mazei (strain ATCC BAA-159 / DSM 3647 / Goe1 / Go1 / JCM 11833 / OCM 88) (Methanosarcina frisia) protein is Probable RNA 2'-phosphotransferase.